Reading from the N-terminus, the 193-residue chain is Peptidyl-tRNA hydrolase (193 aa).

Tyr-17 is a binding site for tRNA. The active-site Proton acceptor is the His-22. Tyr-68, Asn-70, and Asn-116 together coordinate tRNA.

It belongs to the PTH family. Monomer.

The protein localises to the cytoplasm. The catalysed reaction is an N-acyl-L-alpha-aminoacyl-tRNA + H2O = an N-acyl-L-amino acid + a tRNA + H(+). Functionally, hydrolyzes ribosome-free peptidyl-tRNAs (with 1 or more amino acids incorporated), which drop off the ribosome during protein synthesis, or as a result of ribosome stalling. In terms of biological role, catalyzes the release of premature peptidyl moieties from peptidyl-tRNA molecules trapped in stalled 50S ribosomal subunits, and thus maintains levels of free tRNAs and 50S ribosomes. The chain is Peptidyl-tRNA hydrolase from Acinetobacter baumannii (strain AB307-0294).